Reading from the N-terminus, the 239-residue chain is Purine nucleoside phosphorylase DeoD-type 1 (239 aa).

Histidine 5 is an a purine D-ribonucleoside binding site. Residues glycine 21, arginine 25, arginine 44, and 88–91 (RVGS) contribute to the phosphate site. A purine D-ribonucleoside is bound by residues 180-182 (EME) and 204-205 (SD). Aspartate 205 serves as the catalytic Proton donor.

This sequence belongs to the PNP/UDP phosphorylase family. Homohexamer; trimer of homodimers.

The enzyme catalyses a purine D-ribonucleoside + phosphate = a purine nucleobase + alpha-D-ribose 1-phosphate. It carries out the reaction a purine 2'-deoxy-D-ribonucleoside + phosphate = a purine nucleobase + 2-deoxy-alpha-D-ribose 1-phosphate. Its function is as follows. Catalyzes the reversible phosphorolytic breakdown of the N-glycosidic bond in the beta-(deoxy)ribonucleoside molecules, with the formation of the corresponding free purine bases and pentose-1-phosphate. This is Purine nucleoside phosphorylase DeoD-type 1 from Vibrio vulnificus (strain CMCP6).